Consider the following 230-residue polypeptide: MNDADNDGSVVALVPAAGRGVRLGEKSPKAFVPVGGTPMVRLAVDGLLAAGVVDRIIVMVPAEWVESAVALLPPSEVVRVVVGGAERTDSVRAGLAAAPDAGYFLVHDAARALTPPALIGRIVGELRAGRRAVVPALPVVDTVKSVDAAGVVTGTPDRAALRAVQTPQGFTADLLRAAYAADVPATDDAGLVERLGEPVHTVAGDPLAFKITTPLDLRLAETLLDRRAAL.

It belongs to the IspD/TarI cytidylyltransferase family. IspD subfamily.

It catalyses the reaction 2-C-methyl-D-erythritol 4-phosphate + CTP + H(+) = 4-CDP-2-C-methyl-D-erythritol + diphosphate. The protein operates within isoprenoid biosynthesis; isopentenyl diphosphate biosynthesis via DXP pathway; isopentenyl diphosphate from 1-deoxy-D-xylulose 5-phosphate: step 2/6. Catalyzes the formation of 4-diphosphocytidyl-2-C-methyl-D-erythritol from CTP and 2-C-methyl-D-erythritol 4-phosphate (MEP). This is 2-C-methyl-D-erythritol 4-phosphate cytidylyltransferase from Nocardia farcinica (strain IFM 10152).